The sequence spans 674 residues: ATP-dependent DNA helicase Rep (674 aa).

Positions 1-280 constitute a UvrD-like helicase ATP-binding domain; that stretch reads MRLNPGQQHA…IKLEQNYRSS (280 aa). ATP-binding positions include 22–29 and arginine 278; that span reads AGAGSGKT. Positions 281–562 constitute a UvrD-like helicase C-terminal domain; the sequence is GRILKAANIL…QLMTLHASKG (282 aa).

This sequence belongs to the helicase family. UvrD subfamily. In terms of assembly, homodimer.

It carries out the reaction Couples ATP hydrolysis with the unwinding of duplex DNA by translocating in the 3'-5' direction.. The catalysed reaction is ATP + H2O = ADP + phosphate + H(+). Its function is as follows. Rep helicase is a single-stranded DNA-dependent ATPase involved in DNA replication; it can initiate unwinding at a nick in the DNA. It binds to the single-stranded DNA and acts in a progressive fashion along the DNA in the 3' to 5' direction. This Salmonella typhimurium (strain LT2 / SGSC1412 / ATCC 700720) protein is ATP-dependent DNA helicase Rep.